We begin with the raw amino-acid sequence, 286 residues long: Short-chain dehydrogenase fogD (286 aa).

Positions 8, 34, 55, 147, 151, 180, and 182 each coordinate NADP(+). Tyr-147 (proton acceptor) is an active-site residue. Residue Lys-151 is the Lowers pKa of active site Tyr of the active site.

The protein belongs to the short-chain dehydrogenases/reductases (SDR) family.

It participates in secondary metabolite biosynthesis. Its function is as follows. Short-chain dehydrogenase; part of the gene cluster that mediates the biosynthesis of flavoglaucin and congeners (including aspergin, dihydroauroglaucin and auroglaucin), prenylated salicylaldehyde derivatives carrying a saturated or an unsaturated C-7 side chain. The PKS fogA releases the carboxylic acid (8E,10E,12E)-3,5,7-trihydroxytetradeca-8,10,12-trienoic acid as its product, as well as derivatives with one and two double bonds. FogA is indeed able to reduce the initial triketide, thus being at least partially responsible for the differently saturated heptyl side chains of flavoglaucin congeners. The oxidoreductases fogB, fogC and fogD modify the nascent polyketide in fogA-bound form and, together, fogA, fogB, fogC and fogD are necessary for the formation of the aromatic core and the cyclized PKS products are released as salicyl alcohols. In particular, fogB is responsible for oxidation of a hydroxyl group or reduction of remaining double bond(s) at the C-7 residue whereas fogD is probably involved in the reductive release of the modified PKS products. The cytochrome P450 monooxygenase fogE is then responsible for the hydroxylation at C-3 of the benzene ring. The fogE products are substrates of the prenyltransferase fogH and the prenylated benzyl alcohols are subsequently oxidized by the fogF to produce the final aryl aldehydes flavoglaucin and congeners. The short-chain dehydrogenase fogG does not seem to be involved in the biosynthesis of the prenylated salicylaldehyde derivatives. The polypeptide is Short-chain dehydrogenase fogD (Aspergillus ruber (strain CBS 135680)).